A 658-amino-acid chain; its full sequence is MERQFEIVSAYSPQGDQPVAIEKLVEGINSGKKKQVLLGATGTGKTFTISNVIKEVQKPTLVMAHNKTLAGQLYSELKDFFPNNAVEYFVSYYDYYQPEAYVPQTDTFIEKDAQINDEIDKLRHSATSALFERDDVIIVASVSCIYGLGSPEEYRELVVSLRVGMEKDRNQLLRELVDVQYGRNDIDFKRGTFRVRGDVVEIFPASLDEHCIRIEFFGDEIDRIREVNALTGEVLAERDHVAIFPASHFVTREEKMKVAIENIEKELEERLKELNDNGKLLEAQRIEQRTRYDLEMMREMGFCSGIENYSRHLTLRPAGATPYTLLDYFPKDFLIVMDESHVSVPQVRAMYNGDQARKQVLVDHGFRLPSALDNRPLTFDEFEEKTNQVIYVSATPGPYELEQSPEVIEQIIRPTGLLDPPIDIRPIEGQIDDLLGEIQDRIAKNERVLITTLTKKMSEDLTDYLKDVGIKVNYLHSEVKTLERIEIIRDLRLGKFDVLVGINLLREGLDIPEVSLVAILDADKEGFLRSERSLIQTIGRAARNENGRVIMYADRITRSMGIAIEETKRRRSIQEAYNEEHGITPKTIQKGVRDVIRATTAAEEPETYEATPAKKMTKKEREKTIAKMEAEMKEAAKALDFERAAELRDLLLELKAEG.

Residues 26-413 (EGINSGKKKQ…SPEVIEQIIR (388 aa)) enclose the Helicase ATP-binding domain. Residue 39 to 46 (GATGTGKT) participates in ATP binding. Residues 92–115 (YYDYYQPEAYVPQTDTFIEKDAQI) carry the Beta-hairpin motif. In terms of domain architecture, Helicase C-terminal spans 430 to 596 (QIDDLLGEIQ…TIQKGVRDVI (167 aa)). The UVR domain occupies 622 to 657 (EKTIAKMEAEMKEAAKALDFERAAELRDLLLELKAE).

This sequence belongs to the UvrB family. In terms of assembly, forms a heterotetramer with UvrA during the search for lesions. Interacts with UvrC in an incision complex.

Its subcellular location is the cytoplasm. Functionally, the UvrABC repair system catalyzes the recognition and processing of DNA lesions. A damage recognition complex composed of 2 UvrA and 2 UvrB subunits scans DNA for abnormalities. Upon binding of the UvrA(2)B(2) complex to a putative damaged site, the DNA wraps around one UvrB monomer. DNA wrap is dependent on ATP binding by UvrB and probably causes local melting of the DNA helix, facilitating insertion of UvrB beta-hairpin between the DNA strands. Then UvrB probes one DNA strand for the presence of a lesion. If a lesion is found the UvrA subunits dissociate and the UvrB-DNA preincision complex is formed. This complex is subsequently bound by UvrC and the second UvrB is released. If no lesion is found, the DNA wraps around the other UvrB subunit that will check the other stand for damage. The polypeptide is UvrABC system protein B (Bacillus anthracis).